The sequence spans 70 residues: Non-histone chromosomal protein H6 (70 aa).

Positions 1–70 are disordered; that stretch reads MPKRKSATKG…AAGDGAGNAK (70 aa). The segment covering 30–45 has biased composition (basic residues); sequence AKPKKAAAPKKAVKGK. The segment covering 46-57 has biased composition (basic and acidic residues); the sequence is KAAENGDAKAEA.

The protein belongs to the HMGN family.

It is found in the nucleus. The protein localises to the secreted. Functionally, non-histone protein that probably binds to the inner side of nucleosomal DNA, altering the association between the DNA and the nucleosome octamer. Its function is as follows. Oncorhyncin III has antibacterial activity against Gram-positive and Gram-negative bacteria at submicromolar concentrations. This is Non-histone chromosomal protein H6 from Oncorhynchus mykiss (Rainbow trout).